The primary structure comprises 533 residues: Lymphocyte cytosolic protein 2 (533 aa).

One can recognise an SAM domain in the interval 15–81; that stretch reads WDPDSLADYF…INKNEERRSI (67 aa). Tyrosine 23 carries the phosphotyrosine modification. The tract at residues 78–417 is disordered; it reads RRSIFTRKPQ…PPSPAEEENS (340 aa). A compositionally biased stretch (acidic residues) spans 108-155; sequence FEEDDYESPNDDQDGEDDGDYESPNEEEEAPVEDDADYEPPPSNDEEA. Positions 184-213 are enriched in pro residues; that stretch reads QQPPVPPQRPMAALPPPPAGRNHSPLPPPQ. The residue at position 207 (serine 207) is a Phosphoserine. Polar residues-rich tracts occupy residues 337 to 350 and 365 to 376; these read MSSN…TKPS and SESNSSFPQSAS. A phosphoserine mark is found at serine 376 and serine 410. The segment covering 400–411 has biased composition (pro residues); it reads LPLPNKPRPPSP. The region spanning 422 to 530 is the SH2 domain; it reads WYVSYITRPE…RYQCTLTHAA (109 aa).

Interacts with SLA. Interacts with CBLB. Interacts with GRB2. Interacts with SHB. Interacts with PRAM1. Interacts (via SH2 domain) with CD6 (via tyrosine phosphorylated C-terminus). Interacts with FYB1 and the phosphorylated form of FYB2. Interacts with 14-3-3 adapter/YWHAZ; this phosphorylation leads to YWHAZ proteolytic degradation. Interacts with VAV1; this interaction plays a role in TCR-mediated cytokine production. Interacts with AGER; this interaction plays an important role in AGER-mediated pro-inflammatory responses and cytokine release. Phosphorylated after T-cell receptor activation by ZAP70, ITK and TXK, which leads to the up-regulation of Th1 preferred cytokine IL-2. SYK-dependent phosphorylation is required for recruitment of PI3K signaling components. As to expression, highly expressed in spleen, thymus and peripheral blood leukocytes. Highly expressed also in T-cell and monocytic cell lines, expressed at lower level in B-cell lines. Not detected in fibroblast or neuroblastoma cell lines.

It localises to the cytoplasm. Its function is as follows. Adapter protein primarily involved in signaling pathways within T-cells, as well as other immune cells such as platelets, mast cells, and natural killer (NK) cells. Plays a crucial role for transducing signal from the T-cell receptor (TCR) after antigen recognition leading to T-cell activation. Mechanistically, once phosphorylated by the kinase ZAP70, mediates interactions with the guanine-nucleotide exchange factor VAV1, the adapter protein NCK and the kinase ITK. In turn, stimulates the activation of PKC-theta/PRKCQ and NF-kappa-B transcriptional activity in response to CD3 and CD28 costimulation. Also plays an essential role in AGER-induced signaling pathways including p38 MAPK and ERK1/2 activation leading to cytokine release and pro-inflammatory responses. This is Lymphocyte cytosolic protein 2 (LCP2) from Homo sapiens (Human).